Reading from the N-terminus, the 274-residue chain is 4-hydroxy-3-methylbut-2-enyl diphosphate reductase (274 aa).

Cys-12 serves as a coordination point for [4Fe-4S] cluster. His-36 and His-70 together coordinate (2E)-4-hydroxy-3-methylbut-2-enyl diphosphate. His-36 and His-70 together coordinate dimethylallyl diphosphate. 2 residues coordinate isopentenyl diphosphate: His-36 and His-70. Cys-92 is a [4Fe-4S] cluster binding site. (2E)-4-hydroxy-3-methylbut-2-enyl diphosphate is bound at residue His-120. Dimethylallyl diphosphate is bound at residue His-120. His-120 lines the isopentenyl diphosphate pocket. Glu-122 (proton donor) is an active-site residue. A (2E)-4-hydroxy-3-methylbut-2-enyl diphosphate-binding site is contributed by Thr-158. Position 186 (Cys-186) interacts with [4Fe-4S] cluster. (2E)-4-hydroxy-3-methylbut-2-enyl diphosphate is bound by residues Ser-214, Ser-215, Asn-216, and Ser-258. Positions 214, 215, 216, and 258 each coordinate dimethylallyl diphosphate. The isopentenyl diphosphate site is built by Ser-214, Ser-215, Asn-216, and Ser-258.

The protein belongs to the IspH family. The cofactor is [4Fe-4S] cluster.

The enzyme catalyses isopentenyl diphosphate + 2 oxidized [2Fe-2S]-[ferredoxin] + H2O = (2E)-4-hydroxy-3-methylbut-2-enyl diphosphate + 2 reduced [2Fe-2S]-[ferredoxin] + 2 H(+). It catalyses the reaction dimethylallyl diphosphate + 2 oxidized [2Fe-2S]-[ferredoxin] + H2O = (2E)-4-hydroxy-3-methylbut-2-enyl diphosphate + 2 reduced [2Fe-2S]-[ferredoxin] + 2 H(+). The protein operates within isoprenoid biosynthesis; dimethylallyl diphosphate biosynthesis; dimethylallyl diphosphate from (2E)-4-hydroxy-3-methylbutenyl diphosphate: step 1/1. Its pathway is isoprenoid biosynthesis; isopentenyl diphosphate biosynthesis via DXP pathway; isopentenyl diphosphate from 1-deoxy-D-xylulose 5-phosphate: step 6/6. In terms of biological role, catalyzes the conversion of 1-hydroxy-2-methyl-2-(E)-butenyl 4-diphosphate (HMBPP) into a mixture of isopentenyl diphosphate (IPP) and dimethylallyl diphosphate (DMAPP). Acts in the terminal step of the DOXP/MEP pathway for isoprenoid precursor biosynthesis. This is 4-hydroxy-3-methylbut-2-enyl diphosphate reductase from Helicobacter pylori (strain P12).